Here is a 137-residue protein sequence, read N- to C-terminus: Protein LTO1 homolog (137 aa).

A2 bears the N-acetylalanine mark. Phosphoserine is present on S4. Positions 22–58 are deca-GX3 motif; required for interaction with YAE1 and the CIA complex; sequence GYREGYEEGSSLGVMEGRQHGTLHGAKIGSEIGCYQG.

This sequence belongs to the LTO1 family. As to quaternary structure, forms a complex with YAE1. Interacts with PYCR1 and PYCR2. As to expression, widely expressed. Highly expressed in placenta, kidney and skeletal muscle.

It is found in the nucleus. The complex LTO1:YAE1 functions as a target specific adapter that probably recruits apo-ABCE1 to the cytosolic iron-sulfur protein assembly (CIA) complex machinery. May be required for biogenesis of the large ribosomal subunit and initiation of translation. May play a role in the regulation of proline metabolism and ROS production. This chain is Protein LTO1 homolog, found in Homo sapiens (Human).